The primary structure comprises 142 residues: HTH-type transcriptional regulator LrpA1 (142 aa).

In terms of domain architecture, HTH asnC-type spans 1-72 (MSTESTEERI…GQSIAMVGID (72 aa)). Residues 22–41 (YAAIAERADVSKPTVRKYID) constitute a DNA-binding region (H-T-H motif).

Its function is as follows. Transcription factor that regulates genes involved in amino acid metabolism. Represses the aspB3 gene, coding for an aspartate transaminase, in the presence of L-aspartate. Another target gene is the basal transcriptional regulator tfbB. Also binds its own promoter. The chain is HTH-type transcriptional regulator LrpA1 (lrpA1) from Halobacterium salinarum (strain ATCC 29341 / DSM 671 / R1).